Reading from the N-terminus, the 208-residue chain is GTP-binding protein YPTM1 (208 aa).

Residues 15 to 23 (GDSSVGKSC), 33 to 40 (YVDSYIST), 63 to 67 (DTAGQ), 121 to 124 (NKCD), and 151 to 153 (SAK) each bind GTP. An Effector region motif is present at residues 37-45 (YISTIGVDF). Positions 189 to 208 (QMKGRPIQQEQQKSSRCCST) are disordered. Over residues 196–208 (QQEQQKSSRCCST) the composition is skewed to polar residues. Residues Cys-205 and Cys-206 are each lipidated (S-geranylgeranyl cysteine).

It belongs to the small GTPase superfamily. Rab family. As to expression, low levels in coleoptiles.

Its subcellular location is the cell membrane. Protein transport. Probably involved in vesicular traffic. The sequence is that of GTP-binding protein YPTM1 (YPTM1) from Zea mays (Maize).